The sequence spans 92 residues: Small ribosomal subunit protein uS15 (92 aa).

It belongs to the universal ribosomal protein uS15 family. Part of the 30S ribosomal subunit. Forms a bridge to the 50S subunit in the 70S ribosome, contacting the 23S rRNA.

Functionally, one of the primary rRNA binding proteins, it binds directly to 16S rRNA where it helps nucleate assembly of the platform of the 30S subunit by binding and bridging several RNA helices of the 16S rRNA. In terms of biological role, forms an intersubunit bridge (bridge B4) with the 23S rRNA of the 50S subunit in the ribosome. The protein is Small ribosomal subunit protein uS15 of Symbiobacterium thermophilum (strain DSM 24528 / JCM 14929 / IAM 14863 / T).